Here is a 249-residue protein sequence, read N- to C-terminus: Molybdate/tungstate transport system permease protein WtpB (249 aa).

The Cytoplasmic segment spans residues 1 to 10; the sequence is MDRRDYLAYA. The helical transmembrane segment at 11–31 threads the bilayer; that stretch reads FAGLGAFLVAFIGLPLFMIFI. Over 32–56 the chain is Extracellular; that stretch reads KQAYDLEALQRTLVDPLVIESIRNS. The 187-residue stretch at 53–239 folds into the ABC transmembrane type-1 domain; that stretch reads IRNSLFTATV…TISLAVFIFL (187 aa). A helical transmembrane segment spans residues 57–77; sequence LFTATVSTLLGILFGVPLGYV. Topologically, residues 78–96 are cytoplasmic; sequence LARKEFKGKNFVQALIDTP. A helical transmembrane segment spans residues 97–117; the sequence is IVIPHSVVGIMLLVTFSDAIL. A topological domain (extracellular) is located at residue Asp-118. A helical membrane pass occupies residues 119-139; sequence NYKGIVAVMLFVSSPFIVNSA. At 140-179 the chain is on the cytoplasmic side; the sequence is RDGFLSVDEKLEYVARTLGASGLRTFFSVTLPNAIHSIAS. A helical membrane pass occupies residues 180-200; sequence GAIMAWARAISEVGAILIVAY. The Extracellular portion of the chain corresponds to 201–223; that stretch reads YPKTAQVLIMEYFNNYGLRASRP. Residues 224 to 244 form a helical membrane-spanning segment; the sequence is IAVILVTISLAVFIFLRWLVG. The Cytoplasmic portion of the chain corresponds to 245–249; it reads RGRNA.

It belongs to the binding-protein-dependent transport system permease family. The complex is composed of two ATP-binding proteins (WtpC), two transmembrane proteins (WtpB) and a solute-binding protein (WtpA).

Its subcellular location is the cell membrane. Part of the ABC transporter complex WtpABC involved in molybdate/tungstate import. Probably responsible for the translocation of the substrate across the membrane. This is Molybdate/tungstate transport system permease protein WtpB from Pyrococcus furiosus (strain ATCC 43587 / DSM 3638 / JCM 8422 / Vc1).